The sequence spans 641 residues: Chaperone protein DnaK (641 aa).

At T199 the chain carries Phosphothreonine; by autocatalysis. Positions 577–590 (KGDNKDEIETRTQK) are enriched in basic and acidic residues. Residues 577–641 (KGDNKDEIET…EFEEVDDKKK (65 aa)) are disordered. Over residues 617-626 (GAEQASAQQD) the composition is skewed to low complexity. The span at 627-641 (DVVDAEFEEVDDKKK) shows a compositional bias: acidic residues.

It belongs to the heat shock protein 70 family.

Functionally, acts as a chaperone. The sequence is that of Chaperone protein DnaK from Thioalkalivibrio sulfidiphilus (strain HL-EbGR7).